The sequence spans 270 residues: 4-hydroxy-tetrahydrodipicolinate reductase (270 aa).

NAD(+) contacts are provided by residues 9–14 and glutamate 35; that span reads GAGGRM. An NADP(+)-binding site is contributed by arginine 36. Residues 99-101 and 123-126 contribute to the NAD(+) site; these read GTT and ASNY. Catalysis depends on histidine 156, which acts as the Proton donor/acceptor. Residue histidine 157 coordinates (S)-2,3,4,5-tetrahydrodipicolinate. Lysine 160 (proton donor) is an active-site residue. Position 166 to 167 (166 to 167) interacts with (S)-2,3,4,5-tetrahydrodipicolinate; that stretch reads GT.

The protein belongs to the DapB family.

Its subcellular location is the cytoplasm. The catalysed reaction is (S)-2,3,4,5-tetrahydrodipicolinate + NAD(+) + H2O = (2S,4S)-4-hydroxy-2,3,4,5-tetrahydrodipicolinate + NADH + H(+). The enzyme catalyses (S)-2,3,4,5-tetrahydrodipicolinate + NADP(+) + H2O = (2S,4S)-4-hydroxy-2,3,4,5-tetrahydrodipicolinate + NADPH + H(+). Its pathway is amino-acid biosynthesis; L-lysine biosynthesis via DAP pathway; (S)-tetrahydrodipicolinate from L-aspartate: step 4/4. Functionally, catalyzes the conversion of 4-hydroxy-tetrahydrodipicolinate (HTPA) to tetrahydrodipicolinate. This is 4-hydroxy-tetrahydrodipicolinate reductase from Histophilus somni (strain 129Pt) (Haemophilus somnus).